A 108-amino-acid chain; its full sequence is MEQFECITVEEAYQKLHQGAAVLVDIRDPQSYAMGHAPQAFHLTNDTLGAFMREHGFDTAVMVMCYHGNSSKGAAQYLLQQGYDAVYSIDGGFEAWHRRFPADVANGA.

The region spanning 17–105 is the Rhodanese domain; that stretch reads HQGAAVLVDI…WHRRFPADVA (89 aa). Catalysis depends on C65, which acts as the Cysteine persulfide intermediate.

Belongs to the GlpE family.

The protein resides in the cytoplasm. It catalyses the reaction thiosulfate + hydrogen cyanide = thiocyanate + sulfite + 2 H(+). It carries out the reaction thiosulfate + [thioredoxin]-dithiol = [thioredoxin]-disulfide + hydrogen sulfide + sulfite + 2 H(+). Transferase that catalyzes the transfer of sulfur from thiosulfate to thiophilic acceptors such as cyanide or dithiols. May function in a CysM-independent thiosulfate assimilation pathway by catalyzing the conversion of thiosulfate to sulfite, which can then be used for L-cysteine biosynthesis. This is Thiosulfate sulfurtransferase GlpE from Salmonella choleraesuis (strain SC-B67).